We begin with the raw amino-acid sequence, 401 residues long: Phosphoglycerate kinase, cytosolic (401 aa).

V24, D25, N27, R41, S63, H64, G66, R67, R122, H154, and R155 together coordinate (2R)-3-phosphoglycerate. Position 200 (G200) interacts with ADP. CDP is bound at residue G200. K202 and K206 together coordinate AMP. K206 lines the ATP pocket. G224 is a binding site for ADP. G224 lines the CDP pocket. G225 and G297 together coordinate AMP. 2 residues coordinate ATP: G225 and G297. CDP-binding residues include G322 and F327. F327 provides a ligand contact to ADP. Residue E328 coordinates AMP. E328, D359, and S360 together coordinate ATP. D359 contributes to the Mg(2+) binding site.

It belongs to the phosphoglycerate kinase family. As to quaternary structure, monomer. Mg(2+) is required as a cofactor.

The protein resides in the cytoplasm. The enzyme catalyses (2R)-3-phosphoglycerate + ATP = (2R)-3-phospho-glyceroyl phosphate + ADP. Its pathway is carbohydrate degradation; glycolysis; pyruvate from D-glyceraldehyde 3-phosphate: step 2/5. The protein is Phosphoglycerate kinase, cytosolic of Nicotiana tabacum (Common tobacco).